The following is a 798-amino-acid chain: Penicillin-binding protein 1A (798 aa).

Residues 1–9 are Cytoplasmic-facing; the sequence is MIKKILTTC. Residues 10–30 traverse the membrane as a helical; Signal-anchor for type II membrane protein segment; sequence FGLVFGFCVFGVGLVAIAILV. Residues 31-798 are Periplasmic-facing; the sequence is TYPKLPSLDS…SKQQQLDSLF (768 aa). The tract at residues 50–218 is transglycosylase; that stretch reads LTIYSADGEV…SAYNPIVNPE (169 aa). The active-site Proton donor; for transglycosylase activity is glutamate 88. Positions 378 to 700 are transpeptidase; the sequence is RRALGFAARA…GTIAVPVWVD (323 aa). The active-site Acyl-ester intermediate; for transpeptidase activity is serine 461. The disordered stretch occupies residues 738-798; that stretch reads GLTLDNSGIA…SKQQQLDSLF (61 aa). Residues 768–777 show a composition bias toward basic and acidic residues; it reads AADDEVRQDM. A compositionally biased stretch (polar residues) spans 783 to 798; sequence LPSNTGSKQQQLDSLF.

The protein in the N-terminal section; belongs to the glycosyltransferase 51 family. This sequence in the C-terminal section; belongs to the transpeptidase family.

Its subcellular location is the cell inner membrane. The catalysed reaction is [GlcNAc-(1-&gt;4)-Mur2Ac(oyl-L-Ala-gamma-D-Glu-L-Lys-D-Ala-D-Ala)](n)-di-trans,octa-cis-undecaprenyl diphosphate + beta-D-GlcNAc-(1-&gt;4)-Mur2Ac(oyl-L-Ala-gamma-D-Glu-L-Lys-D-Ala-D-Ala)-di-trans,octa-cis-undecaprenyl diphosphate = [GlcNAc-(1-&gt;4)-Mur2Ac(oyl-L-Ala-gamma-D-Glu-L-Lys-D-Ala-D-Ala)](n+1)-di-trans,octa-cis-undecaprenyl diphosphate + di-trans,octa-cis-undecaprenyl diphosphate + H(+). It catalyses the reaction Preferential cleavage: (Ac)2-L-Lys-D-Ala-|-D-Ala. Also transpeptidation of peptidyl-alanyl moieties that are N-acyl substituents of D-alanine.. The protein operates within cell wall biogenesis; peptidoglycan biosynthesis. Functionally, cell wall formation. Synthesis of cross-linked peptidoglycan from the lipid intermediates. The enzyme has a penicillin-insensitive transglycosylase N-terminal domain (formation of linear glycan strands) and a penicillin-sensitive transpeptidase C-terminal domain (cross-linking of the peptide subunits). The polypeptide is Penicillin-binding protein 1A (mrcA) (Neisseria meningitidis serogroup A / serotype 4A (strain DSM 15465 / Z2491)).